Consider the following 212-residue polypeptide: V-type ATP synthase subunit E (212 aa).

Belongs to the V-ATPase E subunit family.

In terms of biological role, produces ATP from ADP in the presence of a proton gradient across the membrane. This is V-type ATP synthase subunit E from Nitrosococcus oceani (strain ATCC 19707 / BCRC 17464 / JCM 30415 / NCIMB 11848 / C-107).